The sequence spans 327 residues: G-protein coupled receptor 55 (327 aa).

The Extracellular segment spans residues 1-20; that stretch reads MSQPERDNCSFDSVDKLTRT. N8 carries N-linked (GlcNAc...) asparagine glycosylation. A helical transmembrane segment spans residues 21–41; it reads LQLAVHIPTFLLGLVLNLLAI. The Cytoplasmic portion of the chain corresponds to 42–57; sequence RGFSAFLKKRKLDYIA. A helical transmembrane segment spans residues 58–78; that stretch reads TSIYMINLAVFDLLLVLSLPF. The Extracellular segment spans residues 79-93; that stretch reads KMVLPQVESPLPSFC. Residues 94-114 traverse the membrane as a helical segment; that stretch reads TLVECLYFISMYGSVFTICFI. Over 115–136 the chain is Cytoplasmic; that stretch reads SLDRFLAIQYPILASHLRSPRK. The helical transmembrane segment at 137–157 threads the bilayer; the sequence is TFGICCIIWMLVWIGSIPIYT. Over 158–179 the chain is Extracellular; the sequence is FHREVERYKCFHNMSDVTWSAS. N170 carries an N-linked (GlcNAc...) asparagine glycan. A helical membrane pass occupies residues 180–200; the sequence is VFFPLEIFGFLLPMGIMGFCS. The Cytoplasmic portion of the chain corresponds to 201-239; it reads YRSIHILLRRPDSTEDWVQQRDTKGWVQKRACIWTIATN. Residues 240-260 traverse the membrane as a helical segment; that stretch reads LVIFVVSFLPVHLGFFLQYLV. Residues 261-279 are Extracellular-facing; it reads RNRFILDCRMKQGISLFLQ. Residues 280 to 300 form a helical membrane-spanning segment; it reads LSLCFSNINCCLDVFCYYFVI. The Cytoplasmic segment spans residues 301-327; the sequence is KEFRMRIKAHRPSTIKLVNQDTMVSRG.

The protein belongs to the G-protein coupled receptor 1 family. Highly expressed in splenic plasma cells.

It is found in the cell membrane. Its function is as follows. G-protein coupled receptor that binds to several ligands including 2-arachidonoyl lysophosphatidylinositol or lysophosphatidylglucoside with high affinity, leading to rapid and transient activation of numerous intracellular signaling pathways. Induces the Ca(2+) release from intracellular stores via ERK, the heterotrimeric G protein GNA13 and RHOA leading to morphological changes including cell rounding and stress fiber formation. In macrophages, acts downstream of lysophosphatidylglucoside to inhibit the translocation of the phospholipid-transporting ABCA1 to plasma membrane and subsequent cholesterol efflux leading to lipid accumulation and foam cell formation. May be involved in hyperalgesia associated with inflammatory and neuropathic pain. In Mus musculus (Mouse), this protein is G-protein coupled receptor 55 (Gpr55).